A 263-amino-acid polypeptide reads, in one-letter code: uncharacterized protein (263 aa).

In terms of domain architecture, ABC transporter spans L12–S247. ATP is bound at residue G44–S51.

The protein belongs to the ABC transporter superfamily.

This is an uncharacterized protein from Haemophilus influenzae (strain ATCC 51907 / DSM 11121 / KW20 / Rd).